The sequence spans 744 residues: Dual specificity protein kinase shkD (744 aa).

Residues 1 to 276 form a disordered region; that stretch reads MKRFFSNLFK…SGPPEILPEE (276 aa). Composition is skewed to low complexity over residues 25-70, 79-107, and 127-200; these read PTTS…NSNQ, SPST…SFTP, and TSTT…QTAS. A compositionally biased stretch (polar residues) spans 201–210; it reads VNHTSSDQSL. The segment covering 211-236 has biased composition (low complexity); it reads NAQNVTQTNNNNNNNNNNNNNNNANN. The Protein kinase domain occupies 277–534; the sequence is IDRTDFLGQG…EILFRLNEIL (258 aa). Residues 283-291 and lysine 304 each bind ATP; that span reads LGQGSFGSV. The active-site Proton acceptor is aspartate 400. Positions 641 to 734 constitute an SH2 domain; the sequence is WFHGDIVREQ…LVPCPKFTQE (94 aa).

This sequence belongs to the protein kinase superfamily. Ser/Thr protein kinase family. SH2 domain-containing protein kinase subfamily.

It localises to the membrane. It catalyses the reaction L-seryl-[protein] + ATP = O-phospho-L-seryl-[protein] + ADP + H(+). The enzyme catalyses L-threonyl-[protein] + ATP = O-phospho-L-threonyl-[protein] + ADP + H(+). In terms of biological role, required for proper chemotaxis and phagocytosis; proper spatiotemporal control of F-actin levels in chemotaxing cells. Negative regulator of the PI3K (phosphatidylinositol 3 kinase) pathway. Predominantly phosphorylates serines and threonines and tyrosines at a lower level. The chain is Dual specificity protein kinase shkD (shkD) from Dictyostelium discoideum (Social amoeba).